The chain runs to 341 residues: Methionine import ATP-binding protein MetN 1 (341 aa).

The ABC transporter domain occupies 2–241; that stretch reads IEFRQVSKSF…PKTTIAQNFV (240 aa). Residue 38 to 45 coordinates ATP; sequence GYSGAGKS.

This sequence belongs to the ABC transporter superfamily. Methionine importer (TC 3.A.1.24) family. In terms of assembly, the complex is composed of two ATP-binding proteins (MetN), two transmembrane proteins (MetI) and a solute-binding protein (MetQ).

Its subcellular location is the cell membrane. It carries out the reaction L-methionine(out) + ATP + H2O = L-methionine(in) + ADP + phosphate + H(+). The enzyme catalyses D-methionine(out) + ATP + H2O = D-methionine(in) + ADP + phosphate + H(+). Part of the ABC transporter complex MetNIQ involved in methionine import. Responsible for energy coupling to the transport system. In Staphylococcus aureus (strain MRSA252), this protein is Methionine import ATP-binding protein MetN 1.